The sequence spans 481 residues: MYSNRKECPRRVKSFDSVNSGLDENQINNEFNKSTYIKIEDNKEYSENVCERGKASVIFSLKNEIGGLVKALKLFQEKHVNLIHIESRKSKRRNSEFEIFVDCDSNREQLNEIFQLLKPHVNVISMSPPENFTVQEDDMESVPWFPKKISDLDKCANRVLMYGSDLDADHPGFKDNVYRKRRKYFADVAMSYKYGDPIPHIEFTEEEIQTWGTVFRELNKLYPTHACREYLKNLPLLSKHCGYREDNIPQLEDVSRFLRERTGFTIRPVAGYLSPRDFLAGLAFRVFHCTQYVRHDSDPLNTPEPDTCHELLGHVPLLAEPSFAQFSQEIGLASLGASDEAVQKLATCYFFTVEFGLCKQEGKLKVYGAGLLSSISELKHSLSGNAKVKPFDPMVTCNQECIITSFQELYFVSESFEEAKEKMREFAKTIQRPFGLKYNPFTQSVDILKDTKSIAMVVRELRHELDIVNDALNKMNKQLGV.

In terms of domain architecture, ACT spans 56–131; that stretch reads SVIFSLKNEI…NVISMSPPEN (76 aa). Tyrosine 272, arginine 294, and threonine 302 together coordinate L-tryptophan. The Fe cation site is built by histidine 309, histidine 314, and glutamate 354. 2 residues coordinate L-tryptophan: serine 373 and isoleucine 403.

This sequence belongs to the biopterin-dependent aromatic amino acid hydroxylase family. As to quaternary structure, homotetramer. It depends on Fe(2+) as a cofactor.

The enzyme catalyses (6R)-L-erythro-5,6,7,8-tetrahydrobiopterin + L-tryptophan + O2 = 5-hydroxy-L-tryptophan + (4aS,6R)-4a-hydroxy-L-erythro-5,6,7,8-tetrahydrobiopterin. It functions in the pathway aromatic compound metabolism; serotonin biosynthesis; serotonin from L-tryptophan: step 1/2. In terms of biological role, oxidizes L-tryptophan to 5-hydroxy-l-tryptophan in the rate-determining step of serotonin biosynthesis. The sequence is that of Tryptophan 5-hydroxylase (tph1) from Xenopus laevis (African clawed frog).